Reading from the N-terminus, the 795-residue chain is Plakophilin-2 (795 aa).

Residues 1–318 form a required for binding to single-stranded DNA region; the sequence is MAVPGSLAEC…MTLERAVNML (318 aa). Ser-44 is modified (phosphoserine). Residue Arg-46 is modified to Omega-N-methylarginine. Phosphoserine occurs at positions 82, 132, 135, 151, 154, 155, 172, 188, and 232. Disordered stretches follow at residues 197-233 and 245-274; these read GTARRPPGCGSFSDAVFDNGPLKPTMPTHPPGTSHSA and SQARLQSTQSRTARSSWPRSSVRSSLREPG. Positions 245 to 257 are enriched in polar residues; it reads SQARLQSTQSRTA. Residues 258-268 show a composition bias toward low complexity; the sequence is RSSWPRSSVRS. Ser-265 and Ser-287 each carry phosphoserine. 8 ARM repeats span residues 299–339, 343–382, 385–425, 484–530, 585–625, 633–672, 677–718, and 721–763; these read DAQL…QHES, SEARKRVNQLRGIPKLLQLLKLQNEDVQRAACGALRNLVF, NDNK…NLSS, PDGR…NLSY, PHGI…NLTA, LVARMVVQKENGLQHTRKMLHVGDPSVKKTAVSLLRNLSR, QNEI…NLMQ, and YQNA…SLWA.

This sequence belongs to the beta-catenin family. In terms of assembly, interacts with DSC2. Interacts with JUP. Interacts with KRT5/CK5, KRT8/CK8, KRT14/CK14, KRT18/CK18 and VIM. Interacts (via N-terminus) with MARK3/C-TAK1. Interacts with DSP. Interacts with DSG1, DSG2 and DSG3. Interacts (via N-terminus) with CTNNB1. Interacts with CDH1. Interacts with the RNA polymerase III (Pol III) complex proteins POLR3A/RPC155, POLR3F/RPC39 and POLR3C/RPC82. Interacts with CTNNA3. Interacts (via N-terminus) with SCN5A/Nav1.5. Interacts with ANK3/ANKG and GJA1/CX43. Expressed in cardiomyocytes in the heart (at protein level).

It localises to the nucleus. The protein localises to the cell junction. It is found in the desmosome. The protein resides in the cytoplasm. Functionally, a component of desmosome cell-cell junctions which are required for positive regulation of cellular adhesion. Regulates focal adhesion turnover resulting in changes in focal adhesion size, cell adhesion and cell spreading, potentially via transcriptional modulation of beta-integrins. Required to maintain gingival epithelial barrier function. Important component of the desmosome that is also required for localization of desmosome component proteins such as DSC2, DSG2 and JUP to the desmosome cell-cell junction. Required for the formation of desmosome cell junctions in cardiomyocytes, thereby required for the correct formation of the heart, specifically trabeculation and formation of the atria walls. Loss of desmosome cell junctions leads to mis-localization of DSP and DSG2 resulting in disruption of cell-cell adhesion and disordered intermediate filaments. Modulates profibrotic gene expression in cardiomyocytes via regulation of DSP expression and subsequent activation of downstream TGFB1 and MAPK14/p38 MAPK signaling. Required for cardiac sodium current propagation and electrical synchrony in cardiac myocytes, via ANK3 stabilization and modulation of SCN5A/Nav1.5 localization to cell-cell junctions. Required for mitochondrial function, nuclear envelope integrity and positive regulation of SIRT3 transcription via maintaining DES localization at its nuclear envelope and cell tip anchoring points, and thereby preserving regulation of the transcriptional program. Maintenance of nuclear envelope integrity protects against DNA damage and transcriptional dysregulation of genes, especially those involved in the electron transport chain, thereby preserving mitochondrial function and protecting against superoxide radical anion generation. Binds single-stranded DNA (ssDNA). May regulate the localization of GJA1 to gap junctions in intercalated disks of the heart. The sequence is that of Plakophilin-2 from Mus musculus (Mouse).